The primary structure comprises 263 residues: MNPGQDREKIVNIEERIPKIKEQRKQKANRRLISFIMLFFIMVLIIVYLQTPISKVSTISVTGNENVSKKEIIDLSDINSGDTEFWSLDKQKTEKKIQQNKLVKKAEISKSLPNKINIAIEEYKAIAYLEKDDVYYEVLENGSVLPNEVTPDDAGPILVNWTNAKKRSQMAKQLDALSNSLKQSISEIYYTPVKMDENRIKLYMNDGYVVTASIKTFADRMKTYPSIISQLSSNKKGIIHLEVATYFEEFGKNDKAAKKEDEN.

Topologically, residues 1–32 (MNPGQDREKIVNIEERIPKIKEQRKQKANRRL) are cytoplasmic. A helical transmembrane segment spans residues 33–53 (ISFIMLFFIMVLIIVYLQTPI). The alpha stretch occupies residues 51 to 123 (TPISKVSTIS…NKINIAIEEY (73 aa)). One can recognise a POTRA domain in the interval 54 to 123 (SKVSTISVTG…NKINIAIEEY (70 aa)). At 54–263 (SKVSTISVTG…DKAAKKEDEN (210 aa)) the chain is on the extracellular side. Residues 124–251 (KAIAYLEKDD…EVATYFEEFG (128 aa)) are beta. Positions 229–263 (SQLSSNKKGIIHLEVATYFEEFGKNDKAAKKEDEN) are gamma.

The protein belongs to the FtsQ/DivIB family. DivIB subfamily. In terms of assembly, interacts with FtsL, DivIC and PBP-2B.

It localises to the cell membrane. Functionally, cell division protein that may be involved in stabilizing or promoting the assembly of the division complex. Plays an essential role in division at high temperatures, maybe by protecting FtsL from degradation or by promoting formation of the FtsL-DivIC complex. May modulate the transpeptidase activity of PBP-2B. Also required for efficient sporulation at all temperatures. Could be directly involved in the engulfment process or be required to form a sporulation septum competent for engulfment. Influences the Spo0J/Soj system of chromosome segregation. The protein is Cell division protein DivIB of Bacillus subtilis (strain 168).